Reading from the N-terminus, the 877-residue chain is Alanine--tRNA ligase (877 aa).

Residues H565, H569, C667, and H671 each contribute to the Zn(2+) site.

This sequence belongs to the class-II aminoacyl-tRNA synthetase family. Zn(2+) serves as cofactor.

It localises to the cytoplasm. The enzyme catalyses tRNA(Ala) + L-alanine + ATP = L-alanyl-tRNA(Ala) + AMP + diphosphate. Its function is as follows. Catalyzes the attachment of alanine to tRNA(Ala) in a two-step reaction: alanine is first activated by ATP to form Ala-AMP and then transferred to the acceptor end of tRNA(Ala). Also edits incorrectly charged Ser-tRNA(Ala) and Gly-tRNA(Ala) via its editing domain. In Chromobacterium violaceum (strain ATCC 12472 / DSM 30191 / JCM 1249 / CCUG 213 / NBRC 12614 / NCIMB 9131 / NCTC 9757 / MK), this protein is Alanine--tRNA ligase.